The chain runs to 293 residues: MQRARPALWAAALIALALLRGPPAARAGSGAAGTGPVVRCEPCDARALAQCAPPPAAPPCAELVREPGCGCCLTCALREGQACGVYTERCGAGLRCQPPPGEPRPLQALLDGRGICANASAAGRLRAYLLPAPPAPGNGSESEEDRSVDSMENQALPSTHRVPDSKLHSVHTKMDVIKKGHAKDSQRYKVDYESQSTDTQNFSSESKRETEYGPCRREMEDTLNHLKFLNMLSPRGIHIPNCDKKGFYKKKQCRPSKGRKRGFCWCVDKYGQPLPGFDVKGKGDVHCYSMESK.

Positions 1 to 27 (MQRARPALWAAALIALALLRGPPAARA) are cleaved as a signal peptide. Positions 36–119 (PVVRCEPCDA…LDGRGICANA (84 aa)) constitute an IGFBP N-terminal domain. 6 disulfide bridges follow: Cys40/Cys69, Cys43/Cys71, Cys51/Cys72, Cys60/Cys75, Cys83/Cys96, and Cys90/Cys116. N-linked (GlcNAc...) asparagine glycans are attached at residues Asn118 and Asn138. Disordered regions lie at residues 132–166 (APPA…PDSK) and 178–213 (KKGH…TEYG). Position 150 is a phosphoserine (Ser150). Residues 178-192 (KKGHAKDSQRYKVDY) show a composition bias toward basic and acidic residues. Over residues 193–204 (ESQSTDTQNFSS) the composition is skewed to polar residues. A glycan (N-linked (GlcNAc...) asparagine) is linked at Asn201. Ser203 carries the phosphoserine modification. Residues 212 to 287 (YGPCRREMED…DVKGKGDVHC (76 aa)) enclose the Thyroglobulin type-1 domain. 3 disulfide bridges follow: Cys215-Cys242, Cys253-Cys264, and Cys266-Cys287.

As to quaternary structure, interacts with XLKD1. Binds IGF2 more than IGF1. Forms a ternary complex of about 140 to 150 kDa with IGF1 or IGF2 and a 85 kDa glycoprotein (ALS). Interacts with humanin; humanin competes with importin KPNB1 for binding to IGFBP3, blocking IGFBP3 nuclear import and IGFBP3-mediated apoptosis. Interacts with TMEM219. Interacts with RXRA; this interaction modulates the transcriptional activity of RXRA. Interacts with LRP1; this interaction mediates cell growth inhibition independent of IGF1. Phosphorylated by FAM20C in the extracellular medium. Phosphorylated by CK2; resulting in decreased nuclear localization.

It localises to the secreted. It is found in the nucleus. Multifunctional protein that plays a critical role in regulating the availability of IGFs such as IGF1 and IGF2 to their receptors and thereby regulates IGF-mediated cellular processes including proliferation, differentiation, and apoptosis in a cell-type specific manner. Also exhibits IGF-independent antiproliferative and apoptotic effects mediated by its receptor TMEM219/IGFBP-3R. Inhibits the positive effect of humanin on insulin sensitivity. Promotes testicular germ cell apoptosis. Acts via LRP-1/alpha2M receptor, also known as TGF-beta type V receptor, to mediate cell growth inhibition independent of IGF1. Mechanistically, induces serine-specific dephosphorylation of IRS1 or IRS2 upon ligation to its receptor, leading to the inhibitory cascade. In the nucleus, interacts with transcription factors such as retinoid X receptor-alpha/RXRA to regulate transcriptional signaling and apoptosis. The protein is Insulin-like growth factor-binding protein 3 (IGFBP3) of Sus scrofa (Pig).